The following is a 335-amino-acid chain: MIREWKNDCQRIEKQRASDTMVQERKNEKPVRIFNTNSSFQDQAPTCCQEDLSSASPLRIWSKFYRSDPRIALGKYSPLEKEILRLGGIHTIAARRLLAYKQEEECRMLKELQLLSPDYKQAMEYKKKHSSPCAICVPLEKIWTAKVIAPLEAFKMPQREQVNVSKHIERMRLARALGNHQPLPYIERFTRSSFLSGVGLGPMAKNKARRKEDNYDTHNCDDANQDKKEEAEGKNTKRREIKMNVVFKSKEPKKCLTYHGNDRKSFLPAKKPERSIAGLTNRNLFCISEFPGDLMLMNQDFISRRDHFSDLVKTYSLEEESIWKERMRKATPYHY.

Residues 201 to 236 (GPMAKNKARRKEDNYDTHNCDDANQDKKEEAEGKNT) are disordered. The segment covering 210–235 (RKEDNYDTHNCDDANQDKKEEAEGKN) has biased composition (basic and acidic residues).

Functionally, dispensable for normal development and fertility. This is an uncharacterized protein from Homo sapiens (Human).